The chain runs to 328 residues: D-cysteine desulfhydrase (328 aa).

The residue at position 51 (Lys-51) is an N6-(pyridoxal phosphate)lysine.

It belongs to the ACC deaminase/D-cysteine desulfhydrase family. In terms of assembly, homodimer. The cofactor is pyridoxal 5'-phosphate.

The catalysed reaction is D-cysteine + H2O = hydrogen sulfide + pyruvate + NH4(+) + H(+). In terms of biological role, catalyzes the alpha,beta-elimination reaction of D-cysteine and of several D-cysteine derivatives. It could be a defense mechanism against D-cysteine. This chain is D-cysteine desulfhydrase, found in Shigella flexneri serotype 5b (strain 8401).